Consider the following 418-residue polypeptide: Serine hydroxymethyltransferase (418 aa).

Residues Leu-121 and 125-127 each bind (6S)-5,6,7,8-tetrahydrofolate; that span reads GHL. N6-(pyridoxal phosphate)lysine is present on Lys-230. Position 356–358 (356–358) interacts with (6S)-5,6,7,8-tetrahydrofolate; that stretch reads SPF.

The protein belongs to the SHMT family. In terms of assembly, homodimer. Pyridoxal 5'-phosphate is required as a cofactor.

The protein resides in the cytoplasm. It carries out the reaction (6R)-5,10-methylene-5,6,7,8-tetrahydrofolate + glycine + H2O = (6S)-5,6,7,8-tetrahydrofolate + L-serine. It participates in one-carbon metabolism; tetrahydrofolate interconversion. The protein operates within amino-acid biosynthesis; glycine biosynthesis; glycine from L-serine: step 1/1. Its function is as follows. Catalyzes the reversible interconversion of serine and glycine with tetrahydrofolate (THF) serving as the one-carbon carrier. This reaction serves as the major source of one-carbon groups required for the biosynthesis of purines, thymidylate, methionine, and other important biomolecules. Also exhibits THF-independent aldolase activity toward beta-hydroxyamino acids, producing glycine and aldehydes, via a retro-aldol mechanism. The chain is Serine hydroxymethyltransferase from Pseudoalteromonas translucida (strain TAC 125).